We begin with the raw amino-acid sequence, 245 residues long: Probable 2-phosphosulfolactate phosphatase (245 aa).

Belongs to the ComB family. The cofactor is Mg(2+).

The enzyme catalyses (2R)-O-phospho-3-sulfolactate + H2O = (2R)-3-sulfolactate + phosphate. The polypeptide is Probable 2-phosphosulfolactate phosphatase (Nostoc sp. (strain PCC 7120 / SAG 25.82 / UTEX 2576)).